We begin with the raw amino-acid sequence, 185 residues long: Peptidyl-tRNA hydrolase (185 aa).

Residue Tyr-14 participates in tRNA binding. The active-site Proton acceptor is the His-19. Positions 65, 67, and 113 each coordinate tRNA.

Belongs to the PTH family. In terms of assembly, monomer.

The protein resides in the cytoplasm. It carries out the reaction an N-acyl-L-alpha-aminoacyl-tRNA + H2O = an N-acyl-L-amino acid + a tRNA + H(+). Functionally, hydrolyzes ribosome-free peptidyl-tRNAs (with 1 or more amino acids incorporated), which drop off the ribosome during protein synthesis, or as a result of ribosome stalling. In terms of biological role, catalyzes the release of premature peptidyl moieties from peptidyl-tRNA molecules trapped in stalled 50S ribosomal subunits, and thus maintains levels of free tRNAs and 50S ribosomes. This is Peptidyl-tRNA hydrolase from Rickettsia typhi (strain ATCC VR-144 / Wilmington).